Reading from the N-terminus, the 340-residue chain is Putative cystathionine beta-lyase (340 aa).

Position 208 is an N6-(pyridoxal phosphate)lysine (lysine 208).

It belongs to the trans-sulfuration enzymes family. The cofactor is pyridoxal 5'-phosphate.

The enzyme catalyses L,L-cystathionine + H2O = L-homocysteine + pyruvate + NH4(+). It catalyses the reaction an S-substituted L-cysteine + H2O = a thiol + pyruvate + NH4(+). It functions in the pathway amino-acid biosynthesis; L-methionine biosynthesis via de novo pathway; L-homocysteine from L-cystathionine: step 1/1. This chain is Putative cystathionine beta-lyase (IRC7), found in Saccharomyces cerevisiae (strain ATCC 204508 / S288c) (Baker's yeast).